The following is a 129-amino-acid chain: Cytochrome c3 (129 aa).

Residues Met-1–Ala-22 form the signal peptide. Heme c-binding residues include His-44, His-47, Cys-52, Cys-55, His-56, His-57, Cys-68, Cys-73, His-74, His-92, Cys-101, Cys-104, His-105, Cys-122, Cys-127, and His-128.

Binds 4 heme c groups per subunit.

The protein localises to the periplasm. Functionally, participates in sulfate respiration coupled with phosphorylation by transferring electrons from the enzyme dehydrogenase to ferredoxin. This chain is Cytochrome c3, found in Nitratidesulfovibrio vulgaris (strain ATCC 29579 / DSM 644 / CCUG 34227 / NCIMB 8303 / VKM B-1760 / Hildenborough) (Desulfovibrio vulgaris).